The chain runs to 93 residues: MKFLLGNINSTVLTMAGLRVLSSMIELTAAIVMLVTNDVRKAVVVNSILAIVGPLIFIITMTVGIYQIAGQLSYAKLILIFTGVVLILAGVHK.

A run of 3 helical transmembrane segments spans residues M15–V35, I48–I68, and L72–H92.

Its subcellular location is the cell membrane. This is an uncharacterized protein from Bacillus subtilis (strain 168).